The chain runs to 281 residues: MTDPATTMSWVQVIVLSVVQGLTEFLPVSSSGHLRIVSQLFWGEDAGASFTAVIQLGTELAVLVFFAKDIWRILTAWFAGLADKSKRNFDYRMGWMVIAGTIPVGLAGVLLKDLIRENFRNLWITATVLILFSLVFILAERRGKKTRGFEELTMKDAVLMGLWQCLALIPGVSRSGGTISGGLFLNLDREVATRFSFLLAIPAVLASGLFSLPDAFDPQAGQAASGLQLLVGSGIGFVVGYISIAWLLKFVSNHSFAWFAAYRIPLGLLVMALLGTGVMAA.

6 helical membrane passes run 95 to 115, 119 to 139, 152 to 172, 195 to 215, 227 to 247, and 256 to 276; these read WMVI…KDLI, FRNL…FILA, LTMK…IPGV, FSFL…LPDA, LQLL…IAWL, and FAWF…LLGT.

This sequence belongs to the UppP family.

The protein resides in the cell membrane. The catalysed reaction is di-trans,octa-cis-undecaprenyl diphosphate + H2O = di-trans,octa-cis-undecaprenyl phosphate + phosphate + H(+). In terms of biological role, catalyzes the dephosphorylation of undecaprenyl diphosphate (UPP). Confers resistance to bacitracin. This Corynebacterium jeikeium (strain K411) protein is Undecaprenyl-diphosphatase 1.